The following is a 106-amino-acid chain: uncharacterized protein (106 aa).

This is an uncharacterized protein from Bacillus subtilis (strain 168).